We begin with the raw amino-acid sequence, 444 residues long: N-succinylarginine dihydrolase (444 aa).

Substrate is bound by residues 19-28 (SGLSFGNVAS), N110, and 137-138 (HR). E174 is an active-site residue. Residue R214 participates in substrate binding. H250 is an active-site residue. Positions 252 and 362 each coordinate substrate. The active-site Nucleophile is the C368.

Belongs to the succinylarginine dihydrolase family. In terms of assembly, homodimer.

It carries out the reaction N(2)-succinyl-L-arginine + 2 H2O + 2 H(+) = N(2)-succinyl-L-ornithine + 2 NH4(+) + CO2. It participates in amino-acid degradation; L-arginine degradation via AST pathway; L-glutamate and succinate from L-arginine: step 2/5. Catalyzes the hydrolysis of N(2)-succinylarginine into N(2)-succinylornithine, ammonia and CO(2). The sequence is that of N-succinylarginine dihydrolase from Photobacterium profundum (strain SS9).